Here is a 202-residue protein sequence, read N- to C-terminus: Small ribosomal subunit protein uS4 (202 aa).

Residues 93–155 (RRLDNVVRRV…ENLKNLYRGV (63 aa)) enclose the S4 RNA-binding domain.

Belongs to the universal ribosomal protein uS4 family. As to quaternary structure, part of the 30S ribosomal subunit. Contacts protein S5. The interaction surface between S4 and S5 is involved in control of translational fidelity.

In terms of biological role, one of the primary rRNA binding proteins, it binds directly to 16S rRNA where it nucleates assembly of the body of the 30S subunit. Functionally, with S5 and S12 plays an important role in translational accuracy. The sequence is that of Small ribosomal subunit protein uS4 from Rhodopirellula baltica (strain DSM 10527 / NCIMB 13988 / SH1).